The primary structure comprises 495 residues: MKYLLALDQGTTSSWAILFTLEGEVVAVAQRAFAQHYPEPGLVEHDPWEIWESQLWAAKEALRRAGVGPEAVLALGIANQRETTLVWERDTGRPLHPAIVWQDRRTASLCEALRERGLEGLFRARTGLLLDPYFSATKLLWLLERVPGLRERAERGEVCFGTVDTWLLWNLTGGRVHATDPTNASRTLLFHLETLTWDEELLRVLGIPKALLPEVRPSDGDFGETLPGLLGAPIPIRGVLGDQQAALLGQAALGAGEGKCTYGTGAFLLLNTGERPVWAEGGLLTTLAWHLEGKAAYALEGSVFVAGAAVGWLREVGLLGESHEVESLARQVEDAGGVYFVPAFTGLGAPHWDPYARGAILGLTRGTTRAHLARAALEGVAFSVGEVAWAMAGAAGLGLKALKADGGMAQNDLFLEIQADLLGVPVLRPRVTETTALGAAWARGIGAGALSLGDLPALWREEARFLPRMPEARREALYRGWRRAVERAKGWVQEG.

Thr11 is a binding site for ADP. ATP-binding residues include Thr11, Thr12, and Ser13. Thr11 is a binding site for sn-glycerol 3-phosphate. Sn-glycerol 3-phosphate is bound by residues Arg81, Glu82, Tyr133, and Asp242. 5 residues coordinate glycerol: Arg81, Glu82, Tyr133, Asp242, and Gln243. Residues Thr264, Gly307, Gly407, and Asn411 each coordinate ADP. Thr264, Gly307, and Gly407 together coordinate ATP.

This sequence belongs to the FGGY kinase family.

The catalysed reaction is glycerol + ATP = sn-glycerol 3-phosphate + ADP + H(+). Its pathway is polyol metabolism; glycerol degradation via glycerol kinase pathway; sn-glycerol 3-phosphate from glycerol: step 1/1. Its activity is regulated as follows. Inhibited by fructose 1,6-bisphosphate (FBP). In terms of biological role, key enzyme in the regulation of glycerol uptake and metabolism. Catalyzes the phosphorylation of glycerol to yield sn-glycerol 3-phosphate. This Thermus brockianus protein is Glycerol kinase.